Here is a 141-residue protein sequence, read N- to C-terminus: Hemoglobin subunit alpha-A (141 aa).

The region spanning 1 to 141 (VLSAADKTNV…VSTVLTAKYR (141 aa)) is the Globin domain. H58 is a binding site for O2. H87 lines the heme b pocket.

This sequence belongs to the globin family. In terms of assembly, heterotetramer of two alpha chains and two beta chains. Red blood cells.

Involved in oxygen transport from the lung to the various peripheral tissues. This chain is Hemoglobin subunit alpha-A (HBAA), found in Eudynamys scolopaceus (Western koel).